The chain runs to 365 residues: GTPase Obg (365 aa).

Positions M1–L159 constitute an Obg domain. The region spanning A160–Q334 is the OBG-type G domain. Residues G166 to S173, F191 to H195, D213 to G216, N284 to D287, and S315 to L317 contribute to the GTP site. Residues S173 and T193 each coordinate Mg(2+).

Belongs to the TRAFAC class OBG-HflX-like GTPase superfamily. OBG GTPase family. As to quaternary structure, monomer. It depends on Mg(2+) as a cofactor.

It is found in the cytoplasm. In terms of biological role, an essential GTPase which binds GTP, GDP and possibly (p)ppGpp with moderate affinity, with high nucleotide exchange rates and a fairly low GTP hydrolysis rate. Plays a role in control of the cell cycle, stress response, ribosome biogenesis and in those bacteria that undergo differentiation, in morphogenesis control. The protein is GTPase Obg of Cupriavidus taiwanensis (strain DSM 17343 / BCRC 17206 / CCUG 44338 / CIP 107171 / LMG 19424 / R1) (Ralstonia taiwanensis (strain LMG 19424)).